The following is a 485-amino-acid chain: Zinc finger protein 639 (485 aa).

The span at 1-14 (MSEYPKKRKRKTLH) shows a compositional bias: basic residues. Disordered regions lie at residues 1–23 (MSEY…DSSG) and 54–82 (DNKD…SRSQ). At serine 60 the chain carries Phosphoserine. Residue lysine 76 forms a Glycyl lysine isopeptide (Lys-Gly) (interchain with G-Cter in SUMO2) linkage. Phosphoserine is present on serine 88. Residues lysine 177, lysine 181, and lysine 226 each participate in a glycyl lysine isopeptide (Lys-Gly) (interchain with G-Cter in SUMO2) cross-link. 8 consecutive C2H2-type zinc fingers follow at residues 204-227 (YKCE…ILKH), 233-255 (NVCR…AKLH), 260-283 (YICK…ADTH), 289-311 (YWCE…FQEH), 374-397 (FVCQ…AIEH), 403-425 (HVCD…LNSH), 431-454 (YLCQ…DFKH), and 460-482 (HKCS…LPVH). Positions 371–455 (KNFFVCQVCG…LKIHLDFKHS (85 aa)) are interaction with CTNNA2.

The protein belongs to the krueppel C2H2-type zinc-finger protein family. In terms of assembly, interacts with CTNNA2.

The protein localises to the nucleus. Binds DNA and may function as a transcriptional repressor. This is Zinc finger protein 639 (Znf639) from Rattus norvegicus (Rat).